The primary structure comprises 207 residues: Guanylate kinase (207 aa).

The 181-residue stretch at 4–184 (GTLYIVSAPS…ALSDLKTIIR (181 aa)) folds into the Guanylate kinase-like domain. An ATP-binding site is contributed by 11–18 (APSGAGKS).

It belongs to the guanylate kinase family.

The protein resides in the cytoplasm. It carries out the reaction GMP + ATP = GDP + ADP. Essential for recycling GMP and indirectly, cGMP. In Salmonella paratyphi A (strain ATCC 9150 / SARB42), this protein is Guanylate kinase.